Consider the following 453-residue polypeptide: Protein LOW PSII ACCUMULATION 1, chloroplastic (453 aa).

A chloroplast-targeting transit peptide spans 1–92 (MAVATAPSLN…LDLFKRGRVK (92 aa)). 2 TPR repeats span residues 75-108 (AELC…APNP) and 112-145 (QAAY…YNLK). Transmembrane regions (helical) follow at residues 202-222 (FFYF…VPRL) and 238-258 (TTGN…LFLW).

As to quaternary structure, interacts with psbA, but not with psbD, petB, ALB3, LPA2 or LPA3. Is not a component of the PSII complex.

Its subcellular location is the plastid. It is found in the chloroplast thylakoid membrane. Chaperone required for efficient photosystem II (PSII) assembly. Binds to psbA during de novo biogenesis of PSII. In Arabidopsis thaliana (Mouse-ear cress), this protein is Protein LOW PSII ACCUMULATION 1, chloroplastic (LPA1).